We begin with the raw amino-acid sequence, 333 residues long: tRNA (guanine(37)-N(1))/4-demethylwyosine(37)-methyltransferase Taw22 (333 aa).

Residues arginine 174, phenylalanine 191, 213 to 214 (EI), and 243 to 244 (DV) contribute to the S-adenosyl-L-methionine site.

It belongs to the class I-like SAM-binding methyltransferase superfamily. TRM5/TYW2 family.

It localises to the cytoplasm. It catalyses the reaction guanosine(37) in tRNA + S-adenosyl-L-methionine = N(1)-methylguanosine(37) in tRNA + S-adenosyl-L-homocysteine + H(+). The catalysed reaction is 4-demethylwyosine(37) in tRNA(Phe) + S-adenosyl-L-methionine = isowyosine(37) in tRNA(Phe) + S-adenosyl-L-homocysteine + H(+). Its function is as follows. Catalyzes both the N1-methylation of guanosine and the C7-methylation of 4-demethylwyosine (imG-14) at position 37 in tRNA(Phe). The polypeptide is tRNA (guanine(37)-N(1))/4-demethylwyosine(37)-methyltransferase Taw22 (Pyrococcus abyssi (strain GE5 / Orsay)).